Consider the following 2500-residue polypeptide: Non-reducing polyketide synthase atr1 (2500 aa).

The tract at residues 13–260 (VFSPQSKAPK…HNPENANLAL (248 aa)) is N-terminal acylcarrier protein transacylase domain (SAT). One can recognise a Ketosynthase family 3 (KS3) domain in the interval 385-808 (TDAVAVVGMA…GSNSAVLLCQ (424 aa)). Active-site for beta-ketoacyl synthase activity residues include Cys557, His692, and His731. The segment at 908–1199 (MTFSGQSRQS…EFPERHTFLD (292 aa)) is malonyl-CoA:ACP transacylase (MAT) domain. Ser995 serves as the catalytic For acyl/malonyl transferase activity. The interval 1286–1413 (PRLVEPRTKP…GDFGFTTQTQ (128 aa)) is N-terminal hotdog fold. The 299-residue stretch at 1286 to 1584 (PRLVEPRTKP…FTKLPITRLE (299 aa)) folds into the PKS/mFAS DH domain. The tract at residues 1287-1583 (RLVEPRTKPS…QFTKLPITRL (297 aa)) is product template (PT) domain. The active-site Proton acceptor; for dehydratase activity is His1317. Positions 1433–1584 (SETLKSKRAY…FTKLPITRLE (152 aa)) are C-terminal hotdog fold. Asp1495 serves as the catalytic Proton donor; for dehydratase activity. Residues 1594–1649 (AHNTPILKSSQQDSIVSASSSSSTEHSDDDSEDDGSRSPSHSDTSVDSESEAPADN) form a disordered region. The segment covering 1602–1617 (SSQQDSIVSASSSSST) has biased composition (low complexity). The Carrier domain maps to 1649-1725 (NGAAKKLKSL…RIVAPEMAAK (77 aa)). The residue at position 1683 (Ser1683) is an O-(pantetheine 4'-phosphoryl)serine. Positions 2164 to 2496 (KSYRIETMPY…YEFIFDVVGR (333 aa)) are thioesterase (TE) domain. Active-site for thioesterase activity residues include Ser2285 and Asp2434.

It carries out the reaction 6 malonyl-CoA + 2 acetyl-CoA + 2 S-adenosyl-L-methionine + 3 H(+) = 4-O-demethylbarbatate + 2 S-adenosyl-L-homocysteine + 6 CO2 + 8 CoA + H2O. Its pathway is secondary metabolite biosynthesis; terpenoid biosynthesis. Its function is as follows. Non-reducing polyketide synthase; part of the gene cluster that mediates the biosynthesis of atranorin, a depside of polyketide origin that accumulates in the cortical or medullary layers of lichen thalli. The first step in the pathway is performed by the non-reducing polyketide synthase atr1 that produces 4-O-demethylbarbatic acid composed of two 3-methylorsellinic acid (3MOA) moieties from S-adenosyl-L-methionine (SAM), acetyl-CoA and malonyl-CoA units. The pathway continues with the actions of the cytochrome P450 monooygenase atr2 that catalizes the oxidation of c-9 and the O-methyltransferase atr3 that performs the methylation of the carboxyl group to yield atranorin, via the proatranorin II and III intermediates if atr2 acts first, or the proatranorin I intermediate if atr3 acts first. The protein is Non-reducing polyketide synthase atr1 of Stereocaulon alpinum (Alpine snow lichen).